Here is a 432-residue protein sequence, read N- to C-terminus: Transcriptional adapter 3 (432 aa).

A coiled-coil region spans residues 40–69; the sequence is IEELDTLQLELETLLSSASRRLRVLEAETQ. 2 disordered regions span residues 88-127 and 275-313; these read KEHELGTPIKHSKPKKQKLDGKGSHASGPGPGRPKSRNMQ and SPVEDSPIPEISGKESGTDGASTSPRSQNKPFSAPHTKS. Residues 293-305 are compositionally biased toward polar residues; that stretch reads DGASTSPRSQNKP. Residues 367-407 are a coiled coil; sequence LLRLAKEEMNRQELRQRVRMADNEVMDAFRKIMAARQKKRT.

This sequence belongs to the NGG1 family.

The protein localises to the nucleus. Its function is as follows. Functions as a component of the PCAF complex. The PCAF complex is capable of efficiently acetylating histones in a nucleosomal context. This chain is Transcriptional adapter 3 (tada3), found in Xenopus tropicalis (Western clawed frog).